A 449-amino-acid chain; its full sequence is MATRHQRAAAAPQPANRGAAVAAGKQKAAATAAAGRPGARNRQALGDIGNVLNAHVVDGKIQLPEGINRPITRSFGAQLLKKAQENAVAANKIVVQNPARKEPAPKPAKKVVPRPENAAKASTGAGVNENKKPSESEGAGSSSGGSALKYSRKKVVNTLTSVLTARSKHACGITEKPKEVVEDIDKLDGDNQLAVVEYIEDIYNFYRTAQLERRPTDYMSSQVEVNPKMRAILADWIIDVHYKFELMPETLYLTMYVIDRYLSLQPVLRRELQLVGVAAMLIASKYEEMWAPEVQDLIHVCDNAYSRQHILAMEKNILNRLQWNITVPTPYVFLLRFIKAAGGDKELENMVFFFSEMALKEYGMASLCPSLVAASAVYAAQCTLKRSPLWTSTLKHHTGFTESQLRECAKVLVNAHAAAPESKLKTAYRKYASEQLGRVSLRPPAVCLA.

Disordered regions lie at residues 1–37 and 98–147; these read MATR…AGRP and PARK…GGSA. Composition is skewed to low complexity over residues 8 to 37 and 136 to 147; these read AAAA…AGRP and SEGAGSSSGGSA.

It belongs to the cyclin family. Cyclin AB subfamily.

This chain is Cyclin-B1-5 (CYCB1-5), found in Oryza sativa subsp. japonica (Rice).